The following is a 111-amino-acid chain: MKTAICSLLICIFLLQLMVPVNTDGTLESIVEQKVKELLAHRDNCPSTVTKTLSCTSVKATGRLASCPPGMAVTGCACGYACGSWDIRDGTTCHCQCAVMDWATARCCQLS.

The N-terminal stretch at 1-23 (MKTAICSLLICIFLLQLMVPVNT) is a signal peptide. 5 disulfide bridges follow: C55/C108, C67/C107, C76/C93, C78/C95, and C82/C97.

This sequence belongs to the resistin/FIZZ family. As to quaternary structure, homodimer. Heterodimer with RETNLB. In terms of tissue distribution, highly expressed in bone marrow, spleen and white blood cells. Also detected at low levels in thymus, lung, trachea, white adipose tissue, nasal respiratory epithelium, colon, small intestine, kidney, liver, and heart.

It is found in the secreted. Probable hormone. Promotes chemotaxis in myeloid cells. This chain is Resistin-like gamma, found in Rattus norvegicus (Rat).